A 2055-amino-acid polypeptide reads, in one-letter code: Dedicator of cytokinesis protein 9 (2055 aa).

2 positions are modified to phosphoserine: Ser-178 and Ser-181. Residues 185–292 (GITKHGWLYK…WVTVLNKILQ (108 aa)) enclose the PH domain. The tract at residues 301-326 (EKRNGDPHEDDEQSKLEGSGSGLDSY) is disordered. Phosphoserine occurs at positions 444 and 453. The C2 DOCK-type domain maps to 649–827 (SNHLYVYPKY…PLLKISTHLV (179 aa)). Residues Ser-936 and Ser-1244 each carry the phosphoserine modification. Thr-1250 is modified (phosphothreonine). The interval 1253–1291 (INSVRNADSRGSLISTDSGNSLPDRNPEKSNSLDKQQQS) is disordered. A phosphoserine mark is found at Ser-1264, Ser-1270, and Ser-1273. Residues 1264-1276 (SLISTDSGNSLPD) are compositionally biased toward polar residues. Residues 1614-2055 (KSYASTPELR…LSDIMREQMG (442 aa)) enclose the DOCKER domain. An interaction with CDC42 region spans residues 1679–2055 (DEEASMMEDV…LSDIMREQMG (377 aa)).

The protein belongs to the DOCK family. As to quaternary structure, homodimer. Interacts preferentially with nucleotide-depleted CDC42. Expressed in lung. Also detected in Peyers patches, thymus, brain and lymph nodes. Expressed in Purkinje cells.

It is found in the endomembrane system. In terms of biological role, guanine nucleotide-exchange factor (GEF) that activates CDC42 by exchanging bound GDP for free GTP. Overexpression induces filopodia formation. The polypeptide is Dedicator of cytokinesis protein 9 (Mus musculus (Mouse)).